The sequence spans 279 residues: Undecaprenyl-diphosphatase (279 aa).

Transmembrane regions (helical) follow at residues 10–30 (FICF…FLPI), 48–68 (LGVS…IYYF), 96–116 (LFIY…LIKL), 128–148 (GLFS…LSEI), 203–223 (SFLV…FSLF), 229–249 (IDII…IFAI), and 259–279 (NNTL…LTTL).

Belongs to the UppP family.

It localises to the cell inner membrane. The catalysed reaction is di-trans,octa-cis-undecaprenyl diphosphate + H2O = di-trans,octa-cis-undecaprenyl phosphate + phosphate + H(+). Catalyzes the dephosphorylation of undecaprenyl diphosphate (UPP). Confers resistance to bacitracin. This chain is Undecaprenyl-diphosphatase, found in Prochlorococcus marinus (strain NATL1A).